The chain runs to 958 residues: Transportin MOS14 (958 aa).

The Importin N-terminal domain occupies 26 to 93; it reads ADRWLQNFQG…RQSLTTLLKK (68 aa).

The protein belongs to the importin beta family. As to quaternary structure, interacts with RS2Z33, RSZ21, RS31A, SR34 and RAN1.

It is found in the nucleus. Functionally, functions as a nuclear import receptor for serine-arginine rich (SR) proteins. Regulates nuclear import of SR proteins that are required for proper splicing of the two resistance (R) genes SNC1 and RPS4, a crucial step for their functions in plant immunity. The sequence is that of Transportin MOS14 from Arabidopsis thaliana (Mouse-ear cress).